The primary structure comprises 304 residues: MSVAPIDFQQVEKRYDDKLVVDGLSFHVQPGECFGLLGPNGAGKTTALKMLLGITHPDAGSISLCGEPVPSRARHARRRVGVVPQFDNLDPDFTVRENLLVFARYFGLAAHEARALVPPLLEFAKLENKADAKVGELSGGMKRRLTLARALVNNPDVLVLDEPTTGLDPQARHLMWERLRSLLVRGKTILLTTHFMEEAERLCHRLCVIEEGRKIAEGAPRTLIESEIGCDVIEIYGPDPAQLREELAPFAERTEISGETLFCYVDDPEPVNARLKGRAGLRYLHRPANLEDVFLRLTGREMQD.

Residues 6–236 (IDFQQVEKRY…EIGCDVIEIY (231 aa)) enclose the ABC transporter domain. ATP is bound at residue 38 to 45 (GPNGAGKT).

The protein belongs to the ABC transporter superfamily. Lipooligosaccharide exporter (TC 3.A.1.102) family. The complex is composed of two ATP-binding proteins (NodI) and two transmembrane proteins (NodJ).

It localises to the cell inner membrane. In terms of biological role, part of the ABC transporter complex NodIJ involved in the export of the nodulation factors (Nod factors), the bacterial signal molecules that induce symbiosis and subsequent nodulation induction. Nod factors are LCO (lipo-chitin oligosaccharide), a modified beta-1,4-linked N-acetylglucosamine oligosaccharide. This subunit is responsible for energy coupling to the transport system. The chain is Nod factor export ATP-binding protein I from Burkholderia thailandensis (strain ATCC 700388 / DSM 13276 / CCUG 48851 / CIP 106301 / E264).